We begin with the raw amino-acid sequence, 254 residues long: 3-deoxy-manno-octulosonate cytidylyltransferase (254 aa).

It belongs to the KdsB family.

It is found in the cytoplasm. It catalyses the reaction 3-deoxy-alpha-D-manno-oct-2-ulosonate + CTP = CMP-3-deoxy-beta-D-manno-octulosonate + diphosphate. The protein operates within nucleotide-sugar biosynthesis; CMP-3-deoxy-D-manno-octulosonate biosynthesis; CMP-3-deoxy-D-manno-octulosonate from 3-deoxy-D-manno-octulosonate and CTP: step 1/1. It functions in the pathway bacterial outer membrane biogenesis; lipopolysaccharide biosynthesis. Its function is as follows. Activates KDO (a required 8-carbon sugar) for incorporation into bacterial lipopolysaccharide in Gram-negative bacteria. The protein is 3-deoxy-manno-octulosonate cytidylyltransferase of Pseudomonas entomophila (strain L48).